The chain runs to 468 residues: ATP synthase subunit beta 3 (468 aa).

155-162 (GGAGVGKT) serves as a coordination point for ATP.

The protein belongs to the ATPase alpha/beta chains family. As to quaternary structure, F-type ATPases have 2 components, CF(1) - the catalytic core - and CF(0) - the membrane proton channel. CF(1) has five subunits: alpha(3), beta(3), gamma(1), delta(1), epsilon(1). CF(0) has three main subunits: a(1), b(2) and c(9-12). The alpha and beta chains form an alternating ring which encloses part of the gamma chain. CF(1) is attached to CF(0) by a central stalk formed by the gamma and epsilon chains, while a peripheral stalk is formed by the delta and b chains.

Its subcellular location is the cell inner membrane. It carries out the reaction ATP + H2O + 4 H(+)(in) = ADP + phosphate + 5 H(+)(out). Functionally, produces ATP from ADP in the presence of a proton gradient across the membrane. The catalytic sites are hosted primarily by the beta subunits. The sequence is that of ATP synthase subunit beta 3 from Syntrophotalea carbinolica (strain DSM 2380 / NBRC 103641 / GraBd1) (Pelobacter carbinolicus).